We begin with the raw amino-acid sequence, 3828 residues long: Histone-lysine N-methyltransferase trithorax (3828 aa).

Disordered stretches follow at residues Glu25–Ala179, Ala356–Gln390, and Phe512–Arg589. The span at Ala29–Ala57 shows a compositional bias: low complexity. Over residues Ala77 to Ala89 the composition is skewed to polar residues. A compositionally biased stretch (low complexity) spans Gly101–Gly114. A compositionally biased stretch (acidic residues) spans Asp152–Ser165. Residues Ser359–Ala387 are compositionally biased toward low complexity. The span at Arg513–Glu523 shows a compositional bias: basic and acidic residues. Residues Asp524–Ala553 show a composition bias toward acidic residues. Positions Ala554 to Phe581 are enriched in basic and acidic residues. A DNA-binding region (nuclear receptor) is located at residues Ala725 to Ile839. Disordered regions lie at residues Glu933–Pro1036, Glu1075–Pro1094, and Ala1131–Asn1170. Residues Ala960–Lys974 show a composition bias toward basic and acidic residues. Low complexity-rich tracts occupy residues Ala998–Ser1022 and Ala1078–Pro1094. Over residues Glu1140–Asn1170 the composition is skewed to polar residues. 3 PHD-type zinc fingers span residues Arg1251 to Cys1334, Tyr1335 to Cys1380, and Gly1408 to Arg1469. The region spanning Ala1483–Glu1644 is the Bromo domain. A C2HC pre-PHD-type zinc finger spans residues Thr1708–Val1748. Residues Ile1769–Ala1816 form a PHD-type 4 zinc finger. In terms of domain architecture, FYR N-terminal spans Lys1856–Gln1913. Disordered regions lie at residues Cys2252 to Ser2272, Ala2464 to Gln2510, Arg2826 to Ser2848, Arg2897 to Ala2973, Ala2988 to Met3031, Ala3117 to Gly3178, Asn3314 to Asp3338, and Lys3457 to Asp3487. Composition is skewed to low complexity over residues Glu2253 to Thr2268, Gln2483 to Gln2510, and Ser2836 to Ser2848. A compositionally biased stretch (polar residues) spans Arg2897–Thr2917. Low complexity-rich tracts occupy residues Ala2956–Ala2973, Ala2988–Glu2997, Leu3005–Met3031, and Ala3117–Ser3132. The span at Gln3148–Ser3164 shows a compositional bias: polar residues. Over residues Asp3328–Asp3338 the composition is skewed to acidic residues. Positions Gly3493–Tyr3577 constitute an FYR C-terminal domain. The SET domain occupies Asp3690–Lys3806. S-adenosyl-L-methionine-binding positions include His3700, Arg3702, Tyr3744, and Asn3767–His3768. 4 residues coordinate Zn(2+): Cys3770, Cys3816, Cys3818, and Cys3823. A Post-SET domain is found at Glu3812 to Asn3828.

Belongs to the class V-like SAM-binding methyltransferase superfamily. Histone-lysine methyltransferase family. TRX/MLL subfamily. As to quaternary structure, interacts with ash1 via its SET domain.

Its subcellular location is the nucleus. It carries out the reaction L-lysyl(9)-[histone H3] + 3 S-adenosyl-L-methionine = N(6),N(6),N(6)-trimethyl-L-lysyl(9)-[histone H3] + 3 S-adenosyl-L-homocysteine + 3 H(+). Histone methyltransferase that methylates 'Lys-4' of histone H3 (H3K4me). H3K4me represents a specific tag for epigenetic transcriptional activation. Functions in segment determination through interaction with genes of bithorax (BX-C) and antennapedia (ANT-C) complexes. Acts as an activator of BX-C. Involved in the very early regulation of homeotic genes expressed only in the posterior region of the embryo. This is Histone-lysine N-methyltransferase trithorax (trx) from Drosophila virilis (Fruit fly).